Consider the following 253-residue polypeptide: Ribonuclease HII (253 aa).

Residues 70 to 253 (DLIAGVDEVG…KTFAPIKDIL (184 aa)) form the RNase H type-2 domain. Residues Asp-76, Glu-77, and Asp-168 each coordinate a divalent metal cation.

This sequence belongs to the RNase HII family. Requires Mn(2+) as cofactor. Mg(2+) serves as cofactor.

The protein resides in the cytoplasm. It catalyses the reaction Endonucleolytic cleavage to 5'-phosphomonoester.. Endonuclease that specifically degrades the RNA of RNA-DNA hybrids. This is Ribonuclease HII from Leuconostoc mesenteroides subsp. mesenteroides (strain ATCC 8293 / DSM 20343 / BCRC 11652 / CCM 1803 / JCM 6124 / NCDO 523 / NBRC 100496 / NCIMB 8023 / NCTC 12954 / NRRL B-1118 / 37Y).